Consider the following 105-residue polypeptide: Protamine-2 (105 aa).

The interval 1–74 is disordered; that stretch reads MVRYRMRSPS…RRSCRRRRRH (74 aa). 3 positions are modified to phosphoserine: Ser-8, Ser-10, and Ser-33. Positions 33–42 are enriched in basic and acidic residues; sequence SPERVEDYGR. A compositionally biased stretch (basic residues) spans 43-74; it reads THRGHHRHRRCSRKRLHRIHKRRRSCRRRRRH.

The protein belongs to the protamine P2 family. In terms of assembly, interacts with TDRP. In terms of processing, proteolytic processing into mature chains is required for histone eviction during spermatogenesis. Transition proteins (TNP1 and TNP2) are required for processing. In terms of tissue distribution, testis.

The protein resides in the nucleus. The protein localises to the chromosome. Protamines substitute for histones in the chromatin of sperm during the haploid phase of spermatogenesis. They compact sperm DNA into a highly condensed, stable and inactive complex. The protein is Protamine-2 (Prm2) of Rattus fuscipes (Bush rat).